A 244-amino-acid chain; its full sequence is MKTTLAERLKTARTAQGLSQKALGDMIGVSQAAIQKIEVGKASQTTKIVELSNNLRVRPEWLANGEGPMRSSEVTRSLQEPSIPPKSEWGTVSAWDSTTELSEDEVEVPFLKDIEFACGDGRIQSEDYNGFKLRFSKATLRKVGANTDGSGVLCFPAAGDSMEPIIPDGTTVAVDTNNKRIIDGKLYAIAQEGGGNDKLKRIKQLYRKPGGLLTIHSFNRETDEEAYESDVEIIGRVFWYSVLL.

Residues 9 to 62 form the HTH cro/C1-type domain; it reads LKTARTAQGLSQKALGDMIGVSQAAIQKIEVGKASQTTKIVELSNNLRVRPEWL. Residues 20-39 constitute a DNA-binding region (H-T-H motif); it reads QKALGDMIGVSQAAIQKIEV.

In terms of biological role, regulates pectin lyase production in response to DNA damage. The protein is HTH-type transcriptional regulator RdgA (rdgA) of Pectobacterium carotovorum subsp. carotovorum (Erwinia carotovora subsp. carotovora).